The chain runs to 173 residues: MGIPCHFALFELQPGFRLDLEQLATRYRELARGVHPDRFADASEREQRSALEQSARLNDAYQTLKSPAQRARYLLTISGHEVPMEVTVHDPEFLLQQMQWREELEDLQDSADLAGVAAFKRRLKTAQEELNESFAACWDDAAQREQAERLMRRMQFLDKLTYEVRQLEERLDD.

Residues 5–77 (CHFALFELQP…AQRARYLLTI (73 aa)) form the J domain.

It belongs to the HscB family. As to quaternary structure, interacts with HscA and stimulates its ATPase activity.

Functionally, co-chaperone involved in the maturation of iron-sulfur cluster-containing proteins. Seems to help targeting proteins to be folded toward HscA. In Pseudomonas fluorescens (strain Pf0-1), this protein is Co-chaperone protein HscB homolog.